The following is a 96-amino-acid chain: Small ribosomal subunit protein bS20 (96 aa).

The protein belongs to the bacterial ribosomal protein bS20 family.

Its function is as follows. Binds directly to 16S ribosomal RNA. In Thermotoga petrophila (strain ATCC BAA-488 / DSM 13995 / JCM 10881 / RKU-1), this protein is Small ribosomal subunit protein bS20.